Consider the following 356-residue polypeptide: Nicotinate-nucleotide--dimethylbenzimidazole phosphoribosyltransferase (356 aa).

Residue glutamate 317 is the Proton acceptor of the active site.

This sequence belongs to the CobT family. Homodimer.

It carries out the reaction 5,6-dimethylbenzimidazole + nicotinate beta-D-ribonucleotide = alpha-ribazole 5'-phosphate + nicotinate + H(+). Its pathway is nucleoside biosynthesis; alpha-ribazole biosynthesis; alpha-ribazole from 5,6-dimethylbenzimidazole: step 1/2. Functionally, catalyzes the synthesis of alpha-ribazole-5'-phosphate from nicotinate mononucleotide (NAMN) and 5,6-dimethylbenzimidazole (DMB). In Salmonella agona (strain SL483), this protein is Nicotinate-nucleotide--dimethylbenzimidazole phosphoribosyltransferase.